Consider the following 405-residue polypeptide: Argininosuccinate synthase (405 aa).

Residues 10 to 18 and Ala-37 contribute to the ATP site; that span reads AYSGGLDTS. L-citrulline-binding residues include Tyr-88 and Ser-93. Position 118 (Gly-118) interacts with ATP. Positions 120, 124, and 125 each coordinate L-aspartate. Asn-124 lines the L-citrulline pocket. Residues Arg-128, Ser-179, Ser-188, Glu-264, and Tyr-276 each contribute to the L-citrulline site.

It belongs to the argininosuccinate synthase family. Type 1 subfamily. In terms of assembly, homotetramer.

It localises to the cytoplasm. It catalyses the reaction L-citrulline + L-aspartate + ATP = 2-(N(omega)-L-arginino)succinate + AMP + diphosphate + H(+). It functions in the pathway amino-acid biosynthesis; L-arginine biosynthesis; L-arginine from L-ornithine and carbamoyl phosphate: step 2/3. The polypeptide is Argininosuccinate synthase (Pseudomonas syringae pv. tomato (strain ATCC BAA-871 / DC3000)).